A 122-amino-acid polypeptide reads, in one-letter code: Large ribosomal subunit protein uL18 (122 aa).

It belongs to the universal ribosomal protein uL18 family. In terms of assembly, part of the 50S ribosomal subunit; part of the 5S rRNA/L5/L18/L25 subcomplex. Contacts the 5S and 23S rRNAs.

This is one of the proteins that bind and probably mediate the attachment of the 5S RNA into the large ribosomal subunit, where it forms part of the central protuberance. The protein is Large ribosomal subunit protein uL18 of Thermotoga petrophila (strain ATCC BAA-488 / DSM 13995 / JCM 10881 / RKU-1).